We begin with the raw amino-acid sequence, 154 residues long: uncharacterized protein (154 aa).

Transmembrane regions (helical) follow at residues 26–48 (VSGW…GVVT), 97–119 (IAMF…LIVF), and 132–150 (GLYT…YCAW).

The protein localises to the cell membrane. This is an uncharacterized protein from Archaeoglobus fulgidus (strain ATCC 49558 / DSM 4304 / JCM 9628 / NBRC 100126 / VC-16).